The chain runs to 476 residues: ATP synthase subunit beta (476 aa).

Residue 154-161 (GGAGVGKT) participates in ATP binding.

It belongs to the ATPase alpha/beta chains family. As to quaternary structure, F-type ATPases have 2 components, CF(1) - the catalytic core - and CF(0) - the membrane proton channel. CF(1) has five subunits: alpha(3), beta(3), gamma(1), delta(1), epsilon(1). CF(0) has three main subunits: a(1), b(2) and c(9-12). The alpha and beta chains form an alternating ring which encloses part of the gamma chain. CF(1) is attached to CF(0) by a central stalk formed by the gamma and epsilon chains, while a peripheral stalk is formed by the delta and b chains.

The protein localises to the cell inner membrane. The enzyme catalyses ATP + H2O + 4 H(+)(in) = ADP + phosphate + 5 H(+)(out). Functionally, produces ATP from ADP in the presence of a proton gradient across the membrane. The catalytic sites are hosted primarily by the beta subunits. This is ATP synthase subunit beta from Nitrobacter hamburgensis (strain DSM 10229 / NCIMB 13809 / X14).